The following is a 429-amino-acid chain: ATP-dependent Clp protease ATP-binding subunit ClpX (429 aa).

In terms of domain architecture, ClpX-type ZB spans 1-54; the sequence is MARSKSQKIEGCSFCGRTRAEAEGKIISAKSVAICFECSKICHNLFKEESDKPA. Residues Cys-12, Cys-15, Cys-35, and Cys-38 each contribute to the Zn(2+) site. 119–126 contacts ATP; that stretch reads PTGSGKTL.

It belongs to the ClpX chaperone family. In terms of assembly, component of the ClpX-ClpP complex. Forms a hexameric ring that, in the presence of ATP, binds to fourteen ClpP subunits assembled into a disk-like structure with a central cavity, resembling the structure of eukaryotic proteasomes.

In terms of biological role, ATP-dependent specificity component of the Clp protease. It directs the protease to specific substrates. Can perform chaperone functions in the absence of ClpP. This is ATP-dependent Clp protease ATP-binding subunit ClpX from Borrelia duttonii (strain Ly).